The sequence spans 411 residues: Dihydrosphingosine 1-phosphate phosphatase C823.11 (411 aa).

Residues 1–74 are Lumenal-facing; the sequence is MVHKKKNVDI…LDVYFMYTAT (74 aa). Residues 75–95 form a helical membrane-spanning segment; the sequence is LGTHVFFMLALPIFFWSGCIY. The Cytoplasmic segment spans residues 96 to 99; the sequence is YTLD. The chain crosses the membrane as a helical span at residues 100 to 120; the sequence is ITQLFAAGVYFSGCIKDYFCL. Residues 115–123 are phosphatase sequence motif I; the sequence is KDYFCLPRP. Residues 121-170 are Lumenal-facing; it reads PRPRSPPMVRLTLSSDAEYEYGFPSTHTTNAMATGFYSLFLLLSMSDSMS. The interval 144-147 is phosphatase sequence motif II; it reads PSTH. The active-site Proton donor is histidine 147. A helical transmembrane segment spans residues 171–191; it reads SISYYFLLSLVLLYIASISLG. A phosphatase sequence motif III region spans residues 191 to 202; the sequence is GRIYCGMHGFMD. The Cytoplasmic segment spans residues 192 to 195; sequence RIYC. Residues 196-216 form a helical membrane-spanning segment; it reads GMHGFMDVSTGTILGVTLAIF. Catalysis depends on histidine 198, which acts as the Nucleophile. Over 217–233 the chain is Lumenal; it reads QWKYADFFHNVWSSSST. The chain crosses the membrane as a helical span at residues 234–254; it reads SVPILSVVLALFFIWFHPQPA. Over 255-259 the chain is Cytoplasmic; the sequence is ERCIC. A helical transmembrane segment spans residues 260–280; it reads LEDSISFISVIMGIDLGTWFA. Residues 281 to 293 are Lumenal-facing; it reads SPESLSHLHDNLN. The helical transmembrane segment at 294 to 314 threads the bilayer; that stretch reads SYFLLKFFVRVLFGVCMILIW. At 315–387 the chain is on the cytoplasmic side; sequence KSFAKQALLA…VRFDIETIAR (73 aa). Residues 388-408 traverse the membrane as a helical segment; sequence IIVYSGIGFLCTYFAPKVFLK. The Lumenal portion of the chain corresponds to 409 to 411; it reads WKI.

It belongs to the type 2 lipid phosphate phosphatase family.

The protein resides in the endoplasmic reticulum membrane. Functionally, dihydrosphingosine 1-phosphate phosphatase required for efficient ceramide synthesis from exogenous sphingoid bases. Involved in endocytosis and calcium-mediated signaling. This Schizosaccharomyces pombe (strain 972 / ATCC 24843) (Fission yeast) protein is Dihydrosphingosine 1-phosphate phosphatase C823.11.